The following is a 26-amino-acid chain: Neprilysin (26 aa).

It belongs to the peptidase M13 family. It depends on Zn(2+) as a cofactor.

Its subcellular location is the cell membrane. It catalyses the reaction Preferential cleavage of polypeptides between hydrophobic residues, particularly with Phe or Tyr at P1'.. The enzyme catalyses substance P + H2O = substance P(1-9) + L-Leu-L-Met-NH2. It carries out the reaction substance P + H2O = substance P(1-7) + L-Phe-Gly-L-Leu-L-Met-NH2. The catalysed reaction is neurotensin + H2O = neurotensin(1-11) + L-isoleucyl-L-leucine. It catalyses the reaction neurotensin + H2O = neurotensin(1-10) + L-tyrosyl-L-isoleucyl-L-leucine. In terms of biological role, thermolysin-like specificity, but is almost confined on acting on polypeptides of up to 30 amino acids. Biologically important in the destruction of opioid peptides such as Met- and Leu-enkephalins by cleavage of a Gly-Phe bond. Catalyzes cleavage of bradykinin, substance P and neurotensin peptides. Able to cleave angiotensin-1, angiotensin-2 and angiotensin 1-9. Involved in the degradation of atrial natriuretic factor (ANF) and brain natriuretic factor (BNP(1-32)). Displays UV-inducible elastase activity toward skin preelastic and elastic fibers. This chain is Neprilysin (MME), found in Sus scrofa (Pig).